A 326-amino-acid chain; its full sequence is ATP synthase gamma chain (326 aa).

The protein belongs to the ATPase gamma chain family. In terms of assembly, F-type ATPases have 2 components, CF(1) - the catalytic core - and CF(0) - the membrane proton channel. CF(1) has five subunits: alpha(3), beta(3), gamma(1), delta(1), epsilon(1). CF(0) has three main subunits: a, b and c.

The protein localises to the cell membrane. Functionally, produces ATP from ADP in the presence of a proton gradient across the membrane. The gamma chain is believed to be important in regulating ATPase activity and the flow of protons through the CF(0) complex. In Corynebacterium efficiens (strain DSM 44549 / YS-314 / AJ 12310 / JCM 11189 / NBRC 100395), this protein is ATP synthase gamma chain.